Here is a 221-residue protein sequence, read N- to C-terminus: Transcription factor bHLH148 (221 aa).

2 disordered regions span residues 1–45 and 70–89; these read MASL…GEIH and LNSS…GKAV. Composition is skewed to low complexity over residues 26-41 and 72-82; these read SASS…SSVS and SSASTSSSPTA. The 50-residue stretch at 148 to 197 folds into the bHLH domain; sequence KRRVSVLRLNKKSIPDVNRKVRVLGRLVPGCGKQSVPVILEEATDYIQAL.

Homodimer. Interacts with PRE3. Binds to RSA1.

The protein localises to the nucleus. In terms of biological role, bHLH transcription factor that binds DNA on specific sequence 5'-CANNTG-3' in target gene promoters. Negatively regulates brassinosteroid signaling. Together with BHLH148/RITF1, regulates the transcription of several genes involved in the detoxification of reactive oxygen species (ROS) generated by salt (NaCl) stress. Confers tolerance to salt and to the oxidative stress-inducing reagents hydrogen peroxide H(2)O(2) and methyl viologen (MV). The chain is Transcription factor bHLH148 from Arabidopsis thaliana (Mouse-ear cress).